The chain runs to 333 residues: Electron transfer flavoprotein subunit alpha, mitochondrial (333 aa).

Residues 1–19 (MFRAAAPGQLRRAASLLRF) constitute a mitochondrion transit peptide. The domain I stretch occupies residues 20 to 204 (QSTLVIAEHA…EISEWLDQKL (185 aa)). N6-acetyllysine; alternate is present on Lys59. Lys59 is subject to N6-succinyllysine; alternate. N6-acetyllysine is present on Lys62. Lys69 carries the post-translational modification N6-acetyllysine; alternate. Residue Lys69 is modified to N6-succinyllysine; alternate. N6-acetyllysine is present on Lys75. Residue Lys85 is modified to N6-acetyllysine; alternate. Position 85 is an N6-succinyllysine; alternate (Lys85). Phosphothreonine is present on Thr93. Residues Lys101 and Lys139 each carry the N6-acetyllysine modification. Ser140 is modified (phosphoserine). Lys158 bears the N6-acetyllysine; alternate mark. Residue Lys158 is modified to N6-succinyllysine; alternate. Lys164 is modified (N6-acetyllysine). Position 187 is an N6-succinyllysine (Lys187). Lys203 carries the post-translational modification N6-acetyllysine; alternate. Lys203 carries the post-translational modification N6-succinyllysine; alternate. A domain II region spans residues 205-333 (TKSDRPELTG…PEMTEILKKK (129 aa)). Residue Lys216 is modified to N6-succinyllysine. Arg223 is an FAD binding site. 2 positions are modified to N6-acetyllysine; alternate: Lys226 and Lys232. 2 positions are modified to N6-succinyllysine; alternate: Lys226 and Lys232. Residues Ser248, 263 to 266 (VGQT), 281 to 286 (SGAIQH), and Asn300 contribute to the FAD site. The residue at position 301 (Lys301) is an N6-succinyllysine. Residue 318–319 (DL) coordinates FAD.

This sequence belongs to the ETF alpha-subunit/FixB family. As to quaternary structure, heterodimer composed of ETFA and ETFB. Identified in a complex that contains ETFA, ETFB and ETFRF1. Interaction with ETFRF1 promotes dissociation of the bound FAD and loss of electron transfer activity. Interacts with TASOR. FAD serves as cofactor. The N-terminus is blocked.

Its subcellular location is the mitochondrion matrix. In terms of biological role, heterodimeric electron transfer flavoprotein that accepts electrons from several mitochondrial dehydrogenases, including acyl-CoA dehydrogenases, glutaryl-CoA and sarcosine dehydrogenase. It transfers the electrons to the main mitochondrial respiratory chain via ETF-ubiquinone oxidoreductase (ETF dehydrogenase). Required for normal mitochondrial fatty acid oxidation and normal amino acid metabolism. This chain is Electron transfer flavoprotein subunit alpha, mitochondrial (ETFA), found in Homo sapiens (Human).